The following is a 139-amino-acid chain: Large ribosomal subunit protein uL16 (139 aa).

It belongs to the universal ribosomal protein uL16 family. Part of the 50S ribosomal subunit.

Its function is as follows. Binds 23S rRNA and is also seen to make contacts with the A and possibly P site tRNAs. The protein is Large ribosomal subunit protein uL16 of Prosthecochloris aestuarii (strain DSM 271 / SK 413).